We begin with the raw amino-acid sequence, 358 residues long: Histamine H2 receptor (358 aa).

The Extracellular segment spans residues 1–22; it reads MEPNGTVHSCCLDSMALKVTIS. N-linked (GlcNAc...) asparagine glycosylation occurs at asparagine 4. A helical transmembrane segment spans residues 23–44; the sequence is VVLTTLILITIAGNVVVCLAVS. At 45 to 57 the chain is on the cytoplasmic side; sequence LNRRLRSLTNCFI. A helical membrane pass occupies residues 58 to 81; the sequence is VSLAATDLLLGLLVLPFSAIYQLS. The Extracellular segment spans residues 82 to 92; the sequence is FTWSFGHVFCN. An intrachain disulfide couples cysteine 91 to cysteine 173. A helical membrane pass occupies residues 93–114; sequence IYTSLDVMLCTASILNLFMISL. Over 115–134 the chain is Cytoplasmic; it reads DRYCAVTDPLRYPVLVTPVR. Residues 135 to 159 form a helical membrane-spanning segment; sequence VAISLVFIWVISITLSFLSIHLGWN. Topologically, residues 160–179 are extracellular; that stretch reads SRNGTRGGNDTFKCKVQVNE. The helical transmembrane segment at 180–203 threads the bilayer; that stretch reads VYGLVDGLVTFYLPLLIMCVTYYR. At 204–233 the chain is on the cytoplasmic side; the sequence is IFKIAREQAKRINHISSWKAATIREHKATV. A helical membrane pass occupies residues 234-257; the sequence is TLAAVMGAFIICWFPYFTAFVYRG. Over 258 to 266 the chain is Extracellular; sequence LRGDDAINE. The helical transmembrane segment at 267-288 threads the bilayer; that stretch reads AVEGIVLWLGYANSALNPILYA. The Cytoplasmic segment spans residues 289 to 358; the sequence is ALNRDFRTAY…LTHPQGNPIR (70 aa). Cysteine 304 carries S-palmitoyl cysteine lipidation.

Belongs to the G-protein coupled receptor 1 family.

Its subcellular location is the cell membrane. In terms of biological role, the H2 subclass of histamine receptors mediates gastric acid secretion. The activity of this receptor is mediated by G proteins which activate adenylyl cyclase. In Rattus norvegicus (Rat), this protein is Histamine H2 receptor (Hrh2).